Here is an 848-residue protein sequence, read N- to C-terminus: Neprilysin-11 (848 aa).

The Cytoplasmic portion of the chain corresponds to 1–74; sequence MPFGNDPPDY…WWKSRTTMEK (74 aa). The chain crosses the membrane as a helical; Signal-anchor for type II membrane protein span at residues 75-95; it reads LLLPVLLLFCLLTAVLLAVII. The Extracellular segment spans residues 96-848; that stretch reads NTDKRIEAMK…VNPDHKCIVW (753 aa). The interval 108-161 is disordered; the sequence is HATQTEHAGFGDPTENPTKTAEDPRVPPIVPEAPTSPEPEVTTSTEKPKEPEVC. Pro residues predominate over residues 133–144; it reads VPPIVPEAPTSP. A Peptidase M13 domain is found at 160–848; the sequence is VCSTPGCVRA…VNPDHKCIVW (689 aa). An intrachain disulfide couples Cys161 to Cys166. N-linked (GlcNAc...) asparagine glycosylation is found at Asn178, Asn249, Asn284, Asn312, Asn337, Asn364, Asn398, and Asn438. 4 disulfide bridges follow: Cys184–Cys833, Cys192–Cys793, Cys247–Cys509, and Cys719–Cys845. Position 682 (His682) interacts with Zn(2+). Residue Glu683 is part of the active site. Residue His686 participates in Zn(2+) binding. Asn726 is a glycosylation site (N-linked (GlcNAc...) asparagine). A Zn(2+)-binding site is contributed by Glu744. Asp748 functions as the Proton donor in the catalytic mechanism.

It belongs to the peptidase M13 family. Zn(2+) serves as cofactor.

It localises to the cell membrane. Probable cell surface protease. In Caenorhabditis elegans, this protein is Neprilysin-11 (nep-11).